The sequence spans 240 residues: uncharacterized protein (240 aa).

A disordered region spans residues 216–240 (MKQSKNKPRIRQAVGATRQCRKPQA).

This is an uncharacterized protein from Escherichia coli (strain K12).